The chain runs to 251 residues: Ubiquinone/menaquinone biosynthesis C-methyltransferase UbiE (251 aa).

S-adenosyl-L-methionine-binding positions include Thr-74, Asp-95, and 123–124 (NA).

The protein belongs to the class I-like SAM-binding methyltransferase superfamily. MenG/UbiE family.

The enzyme catalyses a 2-demethylmenaquinol + S-adenosyl-L-methionine = a menaquinol + S-adenosyl-L-homocysteine + H(+). It catalyses the reaction a 2-methoxy-6-(all-trans-polyprenyl)benzene-1,4-diol + S-adenosyl-L-methionine = a 5-methoxy-2-methyl-3-(all-trans-polyprenyl)benzene-1,4-diol + S-adenosyl-L-homocysteine + H(+). Its pathway is quinol/quinone metabolism; menaquinone biosynthesis; menaquinol from 1,4-dihydroxy-2-naphthoate: step 2/2. It functions in the pathway cofactor biosynthesis; ubiquinone biosynthesis. Functionally, methyltransferase required for the conversion of demethylmenaquinol (DMKH2) to menaquinol (MKH2) and the conversion of 2-polyprenyl-6-methoxy-1,4-benzoquinol (DDMQH2) to 2-polyprenyl-3-methyl-6-methoxy-1,4-benzoquinol (DMQH2). This is Ubiquinone/menaquinone biosynthesis C-methyltransferase UbiE from Psychromonas ingrahamii (strain DSM 17664 / CCUG 51855 / 37).